We begin with the raw amino-acid sequence, 217 residues long: Small ribosomal subunit protein uS3 (217 aa).

Positions 38-106 (IRKYIEQRLA…RVHINIIEIK (69 aa)) constitute a KH type-2 domain.

Belongs to the universal ribosomal protein uS3 family. As to quaternary structure, part of the 30S ribosomal subunit. Forms a tight complex with proteins S10 and S14.

Binds the lower part of the 30S subunit head. Binds mRNA in the 70S ribosome, positioning it for translation. This chain is Small ribosomal subunit protein uS3, found in Lactiplantibacillus plantarum (strain ATCC BAA-793 / NCIMB 8826 / WCFS1) (Lactobacillus plantarum).